The primary structure comprises 62 residues: DNA-directed RNA polymerase subunit Rpo10 (62 aa).

The Zn(2+) site is built by C6, C9, C43, and C44.

The protein belongs to the archaeal Rpo10/eukaryotic RPB10 RNA polymerase subunit family. As to quaternary structure, part of the RNA polymerase complex. Requires Zn(2+) as cofactor.

It is found in the cytoplasm. The catalysed reaction is RNA(n) + a ribonucleoside 5'-triphosphate = RNA(n+1) + diphosphate. Functionally, DNA-dependent RNA polymerase (RNAP) catalyzes the transcription of DNA into RNA using the four ribonucleoside triphosphates as substrates. The sequence is that of DNA-directed RNA polymerase subunit Rpo10 from Methanoregula boonei (strain DSM 21154 / JCM 14090 / 6A8).